The chain runs to 215 residues: Thiamine-phosphate synthase (215 aa).

Residues 43-47 (QFRDK) and Asn78 each bind 4-amino-2-methyl-5-(diphosphooxymethyl)pyrimidine. 2 residues coordinate Mg(2+): Asp79 and Asp98. Ser117 is a 4-amino-2-methyl-5-(diphosphooxymethyl)pyrimidine binding site. 143–145 (TNS) is a 2-[(2R,5Z)-2-carboxy-4-methylthiazol-5(2H)-ylidene]ethyl phosphate binding site. Position 146 (Lys146) interacts with 4-amino-2-methyl-5-(diphosphooxymethyl)pyrimidine. 2-[(2R,5Z)-2-carboxy-4-methylthiazol-5(2H)-ylidene]ethyl phosphate is bound by residues Gly174 and 194 to 195 (IS).

The protein belongs to the thiamine-phosphate synthase family. The cofactor is Mg(2+).

The enzyme catalyses 2-[(2R,5Z)-2-carboxy-4-methylthiazol-5(2H)-ylidene]ethyl phosphate + 4-amino-2-methyl-5-(diphosphooxymethyl)pyrimidine + 2 H(+) = thiamine phosphate + CO2 + diphosphate. It carries out the reaction 2-(2-carboxy-4-methylthiazol-5-yl)ethyl phosphate + 4-amino-2-methyl-5-(diphosphooxymethyl)pyrimidine + 2 H(+) = thiamine phosphate + CO2 + diphosphate. It catalyses the reaction 4-methyl-5-(2-phosphooxyethyl)-thiazole + 4-amino-2-methyl-5-(diphosphooxymethyl)pyrimidine + H(+) = thiamine phosphate + diphosphate. It participates in cofactor biosynthesis; thiamine diphosphate biosynthesis; thiamine phosphate from 4-amino-2-methyl-5-diphosphomethylpyrimidine and 4-methyl-5-(2-phosphoethyl)-thiazole: step 1/1. Condenses 4-methyl-5-(beta-hydroxyethyl)thiazole monophosphate (THZ-P) and 2-methyl-4-amino-5-hydroxymethyl pyrimidine pyrophosphate (HMP-PP) to form thiamine monophosphate (TMP). The chain is Thiamine-phosphate synthase from Lactococcus lactis subsp. lactis (strain IL1403) (Streptococcus lactis).